The following is a 531-amino-acid chain: Tyrosine/DOPA decarboxylase 2 (531 aa).

The residue at position 319 (lysine 319) is an N6-(pyridoxal phosphate)lysine.

The protein belongs to the group II decarboxylase family. In terms of assembly, homodimer. It depends on pyridoxal 5'-phosphate as a cofactor. In terms of tissue distribution, predominantly expressed in the roots and stems, while a lower level expression is seen in the sepals and carpels of fully expanded flowers.

It catalyses the reaction L-tyrosine + H(+) = tyramine + CO2. The enzyme catalyses L-dopa + H(+) = dopamine + CO2. The catalysed reaction is 5-hydroxy-L-tryptophan + H(+) = serotonin + CO2. Functionally, marginally higher substrate specificity for L-DOPA over L-tyrosine. In Papaver somniferum (Opium poppy), this protein is Tyrosine/DOPA decarboxylase 2 (TYDC2).